Reading from the N-terminus, the 179-residue chain is ATP synthase subunit delta (179 aa).

It belongs to the ATPase delta chain family. As to quaternary structure, F-type ATPases have 2 components, F(1) - the catalytic core - and F(0) - the membrane proton channel. F(1) has five subunits: alpha(3), beta(3), gamma(1), delta(1), epsilon(1). F(0) has three main subunits: a(1), b(2) and c(10-14). The alpha and beta chains form an alternating ring which encloses part of the gamma chain. F(1) is attached to F(0) by a central stalk formed by the gamma and epsilon chains, while a peripheral stalk is formed by the delta and b chains.

Its subcellular location is the cell inner membrane. Functionally, f(1)F(0) ATP synthase produces ATP from ADP in the presence of a proton or sodium gradient. F-type ATPases consist of two structural domains, F(1) containing the extramembraneous catalytic core and F(0) containing the membrane proton channel, linked together by a central stalk and a peripheral stalk. During catalysis, ATP synthesis in the catalytic domain of F(1) is coupled via a rotary mechanism of the central stalk subunits to proton translocation. In terms of biological role, this protein is part of the stalk that links CF(0) to CF(1). It either transmits conformational changes from CF(0) to CF(1) or is implicated in proton conduction. In Thermosipho melanesiensis (strain DSM 12029 / CIP 104789 / BI429), this protein is ATP synthase subunit delta.